The following is a 100-amino-acid chain: Small ribosomal subunit protein uS14c (100 aa).

This sequence belongs to the universal ribosomal protein uS14 family. As to quaternary structure, part of the 30S ribosomal subunit.

It localises to the plastid. The protein localises to the chloroplast. Functionally, binds 16S rRNA, required for the assembly of 30S particles. This Zygnema circumcarinatum (Green alga) protein is Small ribosomal subunit protein uS14c.